We begin with the raw amino-acid sequence, 101 residues long: Putative defensin-like protein 307 (101 aa).

Residues 1-22 (MEKSALIFIGILLFSTCTSIMA) form the signal peptide. 3 disulfides stabilise this stretch: C29–C49, C35–C54, and C40–C56.

This sequence belongs to the DEFL family.

It is found in the secreted. This is Putative defensin-like protein 307 from Arabidopsis thaliana (Mouse-ear cress).